A 419-amino-acid polypeptide reads, in one-letter code: Dynein regulatory complex protein 9 (419 aa).

2 disordered regions span residues 25–45 (TGEPPEAAEEDLDYEEEEETS) and 394–419 (NFKMPKKDKDDSKDSKGKEKEKRRKK). Acidic residues predominate over residues 30–45 (EAAEEDLDYEEEEETS). Residues 372–401 (ELRSIVKLQAWWRGSVVRKEIGNFKMPKKD) enclose the IQ domain. Residues 394–413 (NFKMPKKDKDDSKDSKGKEK) show a composition bias toward basic and acidic residues.

It belongs to the DRC9 family. As to quaternary structure, component of the nexin-dynein regulatory complex (N-DRC). Interacts (via IQ domain) with CALM when calcium levels are low. Does not interact with CALM in the presence of Ca(2+). Interacts with the HSP70 proteins HSPA1L and HSPA8. May form a complex with CAMK4 and HSP70. In terms of tissue distribution, expressed in the testes (at protein level). Also detected in oviduct (at protein level). Also detected in the trachea.

It is found in the cytoplasm. The protein resides in the cell projection. The protein localises to the cilium. Its subcellular location is the flagellum. It localises to the cytoskeleton. It is found in the flagellum axoneme. Its function is as follows. Component of the nexin-dynein regulatory complex (N-DRC), a key regulator of ciliary/flagellar motility which maintains the alignment and integrity of the distal axoneme and regulates microtubule sliding in motile axonemes. Binds calmodulin when cellular Ca(2+) levels are low and thereby contributes to the regulation of calcium and calmodulin-dependent protein kinase IV (CAMK4) activity; contributes to the regulation of CAMK4 signaling cascades. Required for normal axoneme assembly in sperm flagella, normal sperm tail formation and for male fertility. The chain is Dynein regulatory complex protein 9 (Iqcg) from Mus musculus (Mouse).